The sequence spans 421 residues: tRNA (guanine-N(7)-)-methyltransferase non-catalytic subunit TRM82 (421 aa).

WD repeat units lie at residues 72–112, 170–212, and 216–258; these read AVYS…EDPE, GHVS…IVDK, and GHKE…SQYS.

This sequence belongs to the WD repeat TRM82 family. As to quaternary structure, forms a heterodimer with the catalytic subunit TRM8.

It localises to the nucleus. It functions in the pathway tRNA modification; N(7)-methylguanine-tRNA biosynthesis. Functionally, required for the formation of N(7)-methylguanine at position 46 (m7G46) in tRNA. In the complex, it is required to stabilize and induce conformational changes of the catalytic subunit. The sequence is that of tRNA (guanine-N(7)-)-methyltransferase non-catalytic subunit TRM82 from Candida glabrata (strain ATCC 2001 / BCRC 20586 / JCM 3761 / NBRC 0622 / NRRL Y-65 / CBS 138) (Yeast).